The sequence spans 161 residues: Ribonuclease H (161 aa).

Positions 1-142 (MLKLVKMFSD…CDKIARQSAQ (142 aa)) constitute an RNase H type-1 domain. Mg(2+)-binding residues include Asp10, Glu48, Asp70, and Asp134.

This sequence belongs to the RNase H family. In terms of assembly, monomer. It depends on Mg(2+) as a cofactor.

Its subcellular location is the cytoplasm. The enzyme catalyses Endonucleolytic cleavage to 5'-phosphomonoester.. In terms of biological role, endonuclease that specifically degrades the RNA of RNA-DNA hybrids. This chain is Ribonuclease H (rnhA), found in Buchnera aphidicola subsp. Schizaphis graminum (strain Sg).